A 345-amino-acid chain; its full sequence is Heat-inducible transcription repressor HrcA (345 aa).

The protein belongs to the HrcA family.

Its function is as follows. Negative regulator of class I heat shock genes (grpE-dnaK-dnaJ and groELS operons). Prevents heat-shock induction of these operons. The sequence is that of Heat-inducible transcription repressor HrcA from Corynebacterium diphtheriae (strain ATCC 700971 / NCTC 13129 / Biotype gravis).